The sequence spans 174 residues: Repair DNA polymerase X (174 aa).

The interval 42 to 51 (REEKMLNDVD) is involved in ssDNA binding. Mg(2+) is bound by residues Asp49 and Asp51. Cys81 and Cys86 are oxidised to a cystine. Asp100 serves as a coordination point for Mg(2+).

The protein belongs to the DNA polymerase type-X family. It depends on Mg(2+) as a cofactor.

Its subcellular location is the virion. The catalysed reaction is DNA(n) + a 2'-deoxyribonucleoside 5'-triphosphate = DNA(n+1) + diphosphate. In terms of biological role, error-prone polymerase lacking a proofreading 3'-5' exonuclease which catalyzes the gap-filling reaction during the DNA repair process. Specifically binds intermediates in the single-nucleotide base-excision repair process. Also catalyzes DNA polymerization with low nucleotide-insertion fidelity. Probably acts as a strategic DNA mutase, which gives rise to a rapid emergence of variants. Generates mismatched G-G pairs, in that case, the polymerase first binds the deoxynucleotide followed by mismatch formation. Together with the viral DNA ligase, fills the single nucleotide gaps generated by the AP endonuclease. Binds DNA with high affinity via the helix alphaE. This Ornithodoros (relapsing fever ticks) protein is Repair DNA polymerase X.